Here is a 419-residue protein sequence, read N- to C-terminus: UDP-N-acetylglucosamine 1-carboxyvinyltransferase (419 aa).

22 to 23 (KN) is a phosphoenolpyruvate binding site. Arg-91 is a UDP-N-acetyl-alpha-D-glucosamine binding site. The Proton donor role is filled by Cys-115. Cys-115 carries the 2-(S-cysteinyl)pyruvic acid O-phosphothioketal modification. UDP-N-acetyl-alpha-D-glucosamine contacts are provided by residues 120-124 (RPVDL), 160-163 (KVSV), Asp-305, and Ile-327.

Belongs to the EPSP synthase family. MurA subfamily.

The protein localises to the cytoplasm. The catalysed reaction is phosphoenolpyruvate + UDP-N-acetyl-alpha-D-glucosamine = UDP-N-acetyl-3-O-(1-carboxyvinyl)-alpha-D-glucosamine + phosphate. The protein operates within cell wall biogenesis; peptidoglycan biosynthesis. In terms of biological role, cell wall formation. Adds enolpyruvyl to UDP-N-acetylglucosamine. This Sodalis glossinidius (strain morsitans) protein is UDP-N-acetylglucosamine 1-carboxyvinyltransferase.